The primary structure comprises 199 residues: 3-isopropylmalate dehydratase small subunit (199 aa).

Belongs to the LeuD family. LeuD type 1 subfamily. As to quaternary structure, heterodimer of LeuC and LeuD.

The catalysed reaction is (2R,3S)-3-isopropylmalate = (2S)-2-isopropylmalate. Its pathway is amino-acid biosynthesis; L-leucine biosynthesis; L-leucine from 3-methyl-2-oxobutanoate: step 2/4. Functionally, catalyzes the isomerization between 2-isopropylmalate and 3-isopropylmalate, via the formation of 2-isopropylmaleate. The polypeptide is 3-isopropylmalate dehydratase small subunit (Aeromonas hydrophila subsp. hydrophila (strain ATCC 7966 / DSM 30187 / BCRC 13018 / CCUG 14551 / JCM 1027 / KCTC 2358 / NCIMB 9240 / NCTC 8049)).